The sequence spans 183 residues: Putative 3-methyladenine DNA glycosylase (183 aa).

It belongs to the DNA glycosylase MPG family.

The chain is Putative 3-methyladenine DNA glycosylase from Rickettsia conorii (strain ATCC VR-613 / Malish 7).